We begin with the raw amino-acid sequence, 395 residues long: NAD(P)H-quinone oxidoreductase subunit H, chloroplastic (395 aa).

Belongs to the complex I 49 kDa subunit family. In terms of assembly, NDH is composed of at least 16 different subunits, 5 of which are encoded in the nucleus.

The protein resides in the plastid. It is found in the chloroplast thylakoid membrane. The catalysed reaction is a plastoquinone + NADH + (n+1) H(+)(in) = a plastoquinol + NAD(+) + n H(+)(out). It carries out the reaction a plastoquinone + NADPH + (n+1) H(+)(in) = a plastoquinol + NADP(+) + n H(+)(out). In terms of biological role, NDH shuttles electrons from NAD(P)H:plastoquinone, via FMN and iron-sulfur (Fe-S) centers, to quinones in the photosynthetic chain and possibly in a chloroplast respiratory chain. The immediate electron acceptor for the enzyme in this species is believed to be plastoquinone. Couples the redox reaction to proton translocation, and thus conserves the redox energy in a proton gradient. The polypeptide is NAD(P)H-quinone oxidoreductase subunit H, chloroplastic (Dioscorea elephantipes (Elephant's foot yam)).